Here is a 358-residue protein sequence, read N- to C-terminus: DnaJ homolog subfamily C member 18 (358 aa).

Residues 82 to 146 enclose the J domain; the sequence is NYYEILGVSR…DKRLRYDEYG (65 aa). A helical transmembrane segment spans residues 228–248; sequence AFIQLLPVLVIVIISVITQLL.

It localises to the endoplasmic reticulum membrane. The protein is DnaJ homolog subfamily C member 18 (DNAJC18) of Macaca fascicularis (Crab-eating macaque).